We begin with the raw amino-acid sequence, 147 residues long: Nucleoside diphosphate kinase (147 aa).

Residues Lys-9, Phe-57, Arg-85, Thr-91, Arg-102, and Asn-112 each coordinate ATP. The active-site Pros-phosphohistidine intermediate is His-115.

Belongs to the NDK family. In terms of assembly, homotetramer. Requires Mg(2+) as cofactor.

It localises to the cytoplasm. The catalysed reaction is a 2'-deoxyribonucleoside 5'-diphosphate + ATP = a 2'-deoxyribonucleoside 5'-triphosphate + ADP. It carries out the reaction a ribonucleoside 5'-diphosphate + ATP = a ribonucleoside 5'-triphosphate + ADP. Its function is as follows. Major role in the synthesis of nucleoside triphosphates other than ATP. The ATP gamma phosphate is transferred to the NDP beta phosphate via a ping-pong mechanism, using a phosphorylated active-site intermediate. The polypeptide is Nucleoside diphosphate kinase (Kosmotoga olearia (strain ATCC BAA-1733 / DSM 21960 / TBF 19.5.1)).